The chain runs to 308 residues: Cyclopropane mycolic acid synthase 2 (308 aa).

S-adenosyl-L-methionine contacts are provided by residues 44-45 (YS), 79-87 (LLDIGCGWG), 105-110 (TLSANQ), and 137-138 (WE). Cys290 is a catalytic residue.

The protein belongs to the CFA/CMAS family. Homodimer.

It localises to the cytoplasm. The enzyme catalyses a 1-acyl-2-(9Z)-enoyl-sn-glycero-3-phospholipid + S-adenosyl-L-methionine = a 1-acyl-2-(9-cyclopronane)-acyl-sn-glycero-3-phospholipid + S-adenosyl-L-homocysteine + H(+). It participates in lipid metabolism; mycolic acid biosynthesis. In terms of biological role, catalyzes the formation of trans cyclopropanated ketomycolate or methoxymycolate through the conversion of a double bond to a cyclopropane ring at the proximal position of an oxygenated mycolic acid via the transfer of a methylene group from S-adenosyl-L-methionine. In the absence of MmaA2, CmaA2 has a non-specific cis-cyclopropanating activity and is able to catalyze the conversion of a double bond to a cis cyclopropane ring at the distal position of an alpha mycolic acid. Cyclopropanated mycolic acids are key factors participating in cell envelope permeability, host immunomodulation and persistence. The chain is Cyclopropane mycolic acid synthase 2 (cmaA2) from Mycobacterium leprae (strain TN).